Consider the following 346-residue polypeptide: Phosphoribosylformylglycinamidine cyclo-ligase (346 aa).

Belongs to the AIR synthase family.

Its subcellular location is the cytoplasm. It carries out the reaction 2-formamido-N(1)-(5-O-phospho-beta-D-ribosyl)acetamidine + ATP = 5-amino-1-(5-phospho-beta-D-ribosyl)imidazole + ADP + phosphate + H(+). Its pathway is purine metabolism; IMP biosynthesis via de novo pathway; 5-amino-1-(5-phospho-D-ribosyl)imidazole from N(2)-formyl-N(1)-(5-phospho-D-ribosyl)glycinamide: step 2/2. This chain is Phosphoribosylformylglycinamidine cyclo-ligase, found in Shewanella piezotolerans (strain WP3 / JCM 13877).